A 321-amino-acid chain; its full sequence is Anthranilate phosphoribosyltransferase (321 aa).

5-phospho-alpha-D-ribose 1-diphosphate is bound by residues Gly-72, Gly-75–Asp-76, Thr-80, Asn-82–Thr-85, Lys-99–Ser-107, and Ser-111. Residue Gly-72 participates in anthranilate binding. Ser-84 is a Mg(2+) binding site. Asn-102 contacts anthranilate. Arg-157 provides a ligand contact to anthranilate. Residues Asp-216 and Glu-217 each contribute to the Mg(2+) site.

It belongs to the anthranilate phosphoribosyltransferase family. Homodimer. The cofactor is Mg(2+).

It catalyses the reaction N-(5-phospho-beta-D-ribosyl)anthranilate + diphosphate = 5-phospho-alpha-D-ribose 1-diphosphate + anthranilate. Its pathway is amino-acid biosynthesis; L-tryptophan biosynthesis; L-tryptophan from chorismate: step 2/5. Catalyzes the transfer of the phosphoribosyl group of 5-phosphorylribose-1-pyrophosphate (PRPP) to anthranilate to yield N-(5'-phosphoribosyl)-anthranilate (PRA). The protein is Anthranilate phosphoribosyltransferase of Methanococcus maripaludis (strain C6 / ATCC BAA-1332).